The chain runs to 138 residues: Acidic phospholipase A2 2 (138 aa).

The N-terminal stretch at 1–16 (MRTLWIVAVWLTGVEG) is a signal peptide. Intrachain disulfides connect cysteine 42–cysteine 131, cysteine 44–cysteine 60, cysteine 59–cysteine 111, cysteine 65–cysteine 138, cysteine 66–cysteine 104, cysteine 73–cysteine 97, and cysteine 91–cysteine 102. Ca(2+)-binding residues include tyrosine 43, glycine 45, and glycine 47. Residue histidine 63 is part of the active site. Position 64 (aspartate 64) interacts with Ca(2+). Residue aspartate 105 is part of the active site.

As to quaternary structure, monomer. Ca(2+) serves as cofactor. As to expression, expressed by the venom gland.

It localises to the secreted. It catalyses the reaction a 1,2-diacyl-sn-glycero-3-phosphocholine + H2O = a 1-acyl-sn-glycero-3-phosphocholine + a fatty acid + H(+). In terms of biological role, snake venom phospholipase that inhibits ADP- and collagen-induced human platelet aggregation. This inhibition is completely inhibited by abolition of catalytic activity in case of collagen as inducer and partially inhibited in case of ADP as inducer. PLA2 catalyzes the calcium-dependent hydrolysis of the 2-acyl groups in 3-sn-phosphoglycerides. This is Acidic phospholipase A2 2 from Macrovipera lebetinus (Levantine viper).